The following is a 211-amino-acid chain: Probable GTP-binding protein EngB (211 aa).

The EngB-type G domain occupies Pro22–Pro195. Residues Gly30 to Ser37, Gly57 to Thr61, Asp75 to Gly78, Thr142 to Asp145, and Phe174 to Ser176 contribute to the GTP site. 2 residues coordinate Mg(2+): Ser37 and Thr59.

This sequence belongs to the TRAFAC class TrmE-Era-EngA-EngB-Septin-like GTPase superfamily. EngB GTPase family. The cofactor is Mg(2+).

In terms of biological role, necessary for normal cell division and for the maintenance of normal septation. In Lachnospira eligens (strain ATCC 27750 / DSM 3376 / VPI C15-48 / C15-B4) (Eubacterium eligens), this protein is Probable GTP-binding protein EngB.